The primary structure comprises 131 residues: Cystatin-like cysteine protease inhibitor EPIC3 (131 aa).

A signal peptide spans 1 to 20 (MAFTRSIALFAGLALAASSA). N-linked (GlcNAc...) asparagine glycosylation is present at N33. Residues 71–75 (QTVAG) carry the Secondary area of contact motif.

Belongs to the cystatin family.

The protein localises to the secreted. In terms of biological role, secreted effector that interacts with and inhibits host apoplastic pathogenesis-related papain-like cysteine proteases. Inhibition of host proteases by a pathogen extracellular protease inhibitor forms a specific type of defense-counterdefense mechanism between plants and microbial pathogens. The chain is Cystatin-like cysteine protease inhibitor EPIC3 from Phytophthora infestans (Potato late blight agent).